The following is a 505-amino-acid chain: Prenylcysteine oxidase 1 (505 aa).

Positions 1–27 (MGRVVAELVSSLLGLWLLLCSCGCPEG) are cleaved as a signal peptide. 3 N-linked (GlcNAc...) asparagine glycosylation sites follow: N196, N323, and N353.

The protein belongs to the prenylcysteine oxidase family. FAD serves as cofactor. In terms of tissue distribution, widely expressed.

It is found in the lysosome. It catalyses the reaction an S-polyprenyl-L-cysteine + O2 + H2O = a polyprenal + L-cysteine + H2O2. The enzyme catalyses S-(2E,6E)-farnesyl-L-cysteine + O2 + H2O = (2E,6E)-farnesal + L-cysteine + H2O2. It carries out the reaction [(2E,6E,10E)-geranylgeranyl]-L-cysteine + O2 + H2O = (2E,6E,10E)-geranylgeranial + L-cysteine + H2O2. Functionally, prenylcysteine oxidase that cleaves the thioether bond of prenyl-L-cysteines, such as farnesylcysteine and geranylgeranylcysteine. Only active against free prenylcysteines and not prenylcysteine residues within prenylated proteins or peptides. Involved in the final step in the degradation of prenylated proteins, by degrading prenylcysteines after the protein has been degraded. The protein is Prenylcysteine oxidase 1 of Homo sapiens (Human).